The following is a 361-amino-acid chain: Chorismate synthase (361 aa).

Arginine 48 and arginine 54 together coordinate NADP(+). FMN-binding positions include 125–127 (RSS), 238–239 (NA), glycine 278, 293–297 (KPTSS), and arginine 319.

This sequence belongs to the chorismate synthase family. Homotetramer. It depends on FMNH2 as a cofactor.

It catalyses the reaction 5-O-(1-carboxyvinyl)-3-phosphoshikimate = chorismate + phosphate. It functions in the pathway metabolic intermediate biosynthesis; chorismate biosynthesis; chorismate from D-erythrose 4-phosphate and phosphoenolpyruvate: step 7/7. In terms of biological role, catalyzes the anti-1,4-elimination of the C-3 phosphate and the C-6 proR hydrogen from 5-enolpyruvylshikimate-3-phosphate (EPSP) to yield chorismate, which is the branch point compound that serves as the starting substrate for the three terminal pathways of aromatic amino acid biosynthesis. This reaction introduces a second double bond into the aromatic ring system. This chain is Chorismate synthase, found in Cronobacter sakazakii (strain ATCC BAA-894) (Enterobacter sakazakii).